We begin with the raw amino-acid sequence, 633 residues long: Alpha-amylase (633 aa).

Glu-123 (nucleophile) is an active-site residue. Asp-214 (proton donor) is an active-site residue.

It belongs to the glycosyl hydrolase 57 family.

The catalysed reaction is Endohydrolysis of (1-&gt;4)-alpha-D-glucosidic linkages in polysaccharides containing three or more (1-&gt;4)-alpha-linked D-glucose units.. This Pyrococcus horikoshii (strain ATCC 700860 / DSM 12428 / JCM 9974 / NBRC 100139 / OT-3) protein is Alpha-amylase (amyA).